Here is a 455-residue protein sequence, read N- to C-terminus: Regulatory protein LuxO (455 aa).

A Response regulatory domain is found at 1–112 (MVEDTASVAA…RLRVTVNNAI (112 aa)). D47 carries the 4-aspartylphosphate modification. Positions 132-361 (FIGSSQTMQA…LQNVLRNVVV (230 aa)) constitute a Sigma-54 factor interaction domain. ATP contacts are provided by residues 160-167 (GESGTGKE) and 223-232 (ADGGTLFLDE).

Involved in the regulation of different processes depending on the cell density. Acts together with sigma-54 to repress, perhaps indirectly, some genes. This Vibrio cholerae serotype O1 (strain ATCC 39315 / El Tor Inaba N16961) protein is Regulatory protein LuxO (luxO).